We begin with the raw amino-acid sequence, 457 residues long: Keratin, type II cytoskeletal 7 (457 aa).

N-acetylserine is present on S2. S2 is subject to Phosphoserine. A head region spans residues 2-84; that stretch reads SIHFSSRSTA…DPTIQQVRQE (83 aa). O-linked (GlcNAc) serine glycosylation occurs at S7. R15 carries the dimethylated arginine; alternate modification. R15 carries the post-translational modification Omega-N-methylarginine; alternate. Residues S47 and S65 each carry the phosphoserine modification. The coil 1A stretch occupies residues 84–120; sequence EEREQIKTLNNKFASFIDKVRFLEQQNKMLETKWALL. The IF rod domain maps to 85–397; sequence EREQIKTLNN…KLLEGEESRL (313 aa). T91 carries the post-translational modification Phosphothreonine. The linker 1 stretch occupies residues 121 to 138; it reads QEQKSAKSSQLPRIFEAQ. K124 is covalently cross-linked (Glycyl lysine isopeptide (Lys-Gly) (interchain with G-Cter in SUMO2)). Residues 139–230 form a coil 1B region; sequence IAGLRQQLET…TLHETELAEL (92 aa). The residue at position 173 (K173) is an N6-acetyllysine. Phosphoserine is present on residues S211, S246, and S248. Residues 231 to 254 are linker 12; that stretch reads QSQISDTSVVLSMDNSRSLDLDGI. Residues 255–393 form a coil 2 region; the sequence is IADVKAQYEE…ATYRKLLEGE (139 aa). Glycyl lysine isopeptide (Lys-Gly) (interchain with G-Cter in SUMO2) cross-links involve residues K259 and K280. T283 carries the post-translational modification Phosphothreonine. Glycyl lysine isopeptide (Lys-Gly) (interchain with G-Cter in SUMO2) cross-links involve residues K290 and K325. Residues 394 to 457 form a tail region; it reads ESRLSGDGMG…TSTTRRGTHN (64 aa).

The protein belongs to the intermediate filament family. Heterotetramer of two type I and two type II keratins. Interacts with eukaryotic translation initiator factor 3 (eIF3) subunit EIF3S10. Interacts with GPER1. In terms of processing, arg-15 is dimethylated, probably to asymmetric dimethylarginine. As to expression, expressed in most simple epithelia tested including liver, lactating mammary gland, lung, kidney, stomach, duodenum, colon, oviduct, uterus, pancreas, epididymis, prostate, preputial gland and mesothelium, and in most stratified epithelia tested including dorsal skin, paw/toe, tail, tongue, cervix, forestomach, and bladder. Also expressed in Henle layer of the inner root sheath of whisker follicle.

Blocks interferon-dependent interphase and stimulates DNA synthesis in cells. The protein is Keratin, type II cytoskeletal 7 of Mus musculus (Mouse).